Consider the following 307-residue polypeptide: Sporulation sigma-E factor-processing peptidase (307 aa).

Helical transmembrane passes span 7–27 (LIWM…AVVL), 36–56 (LLLG…PFSH), 57–77 (LMVH…MTFG), 89–109 (LTFY…HFLF), and 127–147 (FGDP…SYFS). D183 is an active-site residue.

Belongs to the peptidase U4 family. Self-associates. Interacts with SigE. Interacts with SpoIIR.

The protein localises to the cell membrane. Its function is as follows. Probable aspartic protease that is responsible for the proteolytic cleavage of the RNA polymerase sigma E factor (SigE/spoIIGB) to yield the active peptide in the mother cell during sporulation. Responds to a signal from the forespore that is triggered by the extracellular signal protein SpoIIR. The sequence is that of Sporulation sigma-E factor-processing peptidase from Priestia megaterium (strain ATCC 12872 / QMB1551) (Bacillus megaterium).